The sequence spans 295 residues: Indole-3-glycerol phosphate synthase (295 aa).

The protein belongs to the TrpC family.

The enzyme catalyses 1-(2-carboxyphenylamino)-1-deoxy-D-ribulose 5-phosphate + H(+) = (1S,2R)-1-C-(indol-3-yl)glycerol 3-phosphate + CO2 + H2O. The protein operates within amino-acid biosynthesis; L-tryptophan biosynthesis; L-tryptophan from chorismate: step 4/5. The chain is Indole-3-glycerol phosphate synthase from Prochlorococcus marinus (strain NATL1A).